The sequence spans 375 residues: Fasciculation and elongation protein zeta-2 (375 aa).

Residues 1 to 42 form a disordered region; that stretch reads MAADGDWQDFYEFQEPAGSVRDQENCNASPEAGAGAHAGGDS. S130, S171, and S190 each carry phosphoserine. Residues 156–177 adopt a coiled-coil conformation; sequence TADQVIEEIEEMMQESPDLEDD. The stretch at 206-281 forms a coiled coil; it reads ERVKRLSVSE…AKKKKKLKNG (76 aa). Residues 265–297 form a disordered region; it reads QKEHKETAKKKKKLKNGSSQNGRNERSHMPGTR.

The protein belongs to the zygin family. As to quaternary structure, homodimer; disulfide-linked. May form heterodimers with FEZ1. Interacts with synaptotagmin.

In terms of biological role, involved in axonal outgrowth and fasciculation. This chain is Fasciculation and elongation protein zeta-2 (Fez2), found in Rattus norvegicus (Rat).